Reading from the N-terminus, the 314-residue chain is Homoserine O-succinyltransferase (314 aa).

Residue C142 is the Acyl-thioester intermediate of the active site. K163 and S192 together coordinate substrate. H235 serves as the catalytic Proton acceptor. E237 is a catalytic residue. Position 249 (R249) interacts with substrate.

This sequence belongs to the MetA family.

It localises to the cytoplasm. It carries out the reaction L-homoserine + succinyl-CoA = O-succinyl-L-homoserine + CoA. The protein operates within amino-acid biosynthesis; L-methionine biosynthesis via de novo pathway; O-succinyl-L-homoserine from L-homoserine: step 1/1. Its function is as follows. Transfers a succinyl group from succinyl-CoA to L-homoserine, forming succinyl-L-homoserine. The chain is Homoserine O-succinyltransferase from Aeromonas salmonicida (strain A449).